We begin with the raw amino-acid sequence, 585 residues long: Glutamate decarboxylase 2 (585 aa).

The interval 1–25 (MASPGSGFWSFGSEDGSGDPENPST) is disordered. Phosphoserine is present on residues Ser3, Ser6, Ser10, and Ser13. Residues Cys30 and Cys45 are each lipidated (S-palmitoyl cysteine). 181 to 183 (QLS) is a substrate binding site. At Lys396 the chain carries N6-(pyridoxal phosphate)lysine. Arg558 contributes to the substrate binding site.

The protein belongs to the group II decarboxylase family. Homodimer. The cofactor is pyridoxal 5'-phosphate. In terms of processing, phosphorylated; which does not affect kinetic parameters or subcellular location. Post-translationally, palmitoylated; which is required for presynaptic clustering.

Its subcellular location is the cytoplasm. The protein resides in the cytosol. The protein localises to the cytoplasmic vesicle. It localises to the presynaptic cell membrane. It is found in the golgi apparatus membrane. It catalyses the reaction L-glutamate + H(+) = 4-aminobutanoate + CO2. Catalyzes the production of GABA. The sequence is that of Glutamate decarboxylase 2 (GAD2) from Canis lupus familiaris (Dog).